We begin with the raw amino-acid sequence, 347 residues long: MEFCVLFGGASFEHEISIVSAIALKGVLKDRIKYFIFLDENHHFYLIEASNMHSKYFAQIKEKKLPPLILTHKGLLKNSFLGAKIIELPLVINLVHGGDGEDGKLASLLEFYRIAFIGPRIEASVLSYNKYLTKLYAKDLGIKTLDHVLLNEKNRANAMDLINFNFPFIIKPNSAGSSLGVSVVKEEKELNYALDSAFEYSKEVLIEPFIQGVKEYNLAGCKIKKDFCFSYVEEPNKQEFLDFKQKYLDFSRTKAPKANLSNALEEQLKENFKKLYNDLFDGAIIRCDFFVIENEVYLNEINPIPGSLANYLFDDFKTTLENLAQSLPKTPKIQIKNSYLLQIQKNK.

An ATP-grasp domain is found at 134 to 332 (KLYAKDLGIK…LAQSLPKTPK (199 aa)). 161–216 (LINFNFPFIIKPNSAGSSLGVSVVKEEKELNYALDSAFEYSKEVLIEPFIQGVKEY) is an ATP binding site. Mg(2+)-binding residues include Asp288, Glu300, and Asn302.

The protein belongs to the D-alanine--D-alanine ligase family. The cofactor is Mg(2+). Mn(2+) is required as a cofactor.

It localises to the cytoplasm. The catalysed reaction is 2 D-alanine + ATP = D-alanyl-D-alanine + ADP + phosphate + H(+). Its pathway is cell wall biogenesis; peptidoglycan biosynthesis. Its function is as follows. Cell wall formation. This is D-alanine--D-alanine ligase from Helicobacter pylori (strain HPAG1).